The sequence spans 401 residues: Argininosuccinate synthase (401 aa).

ATP-binding positions include 10–18 and alanine 38; that span reads AYSGGVDTS. Tyrosine 89 is a binding site for L-citrulline. Glycine 119 serves as a coordination point for ATP. The L-aspartate site is built by threonine 121, asparagine 125, and aspartate 126. Position 125 (asparagine 125) interacts with L-citrulline. L-citrulline-binding residues include arginine 129, serine 177, serine 186, glutamate 262, and tyrosine 274.

Belongs to the argininosuccinate synthase family. Type 1 subfamily. Homotetramer.

It is found in the cytoplasm. The enzyme catalyses L-citrulline + L-aspartate + ATP = 2-(N(omega)-L-arginino)succinate + AMP + diphosphate + H(+). The protein operates within amino-acid biosynthesis; L-arginine biosynthesis; L-arginine from L-ornithine and carbamoyl phosphate: step 2/3. The sequence is that of Argininosuccinate synthase from Prochlorococcus marinus (strain MIT 9313).